The sequence spans 629 residues: tRNA uridine 5-carboxymethylaminomethyl modification enzyme MnmG (629 aa).

Residues 13–18 (GGGHAG), V125, and S180 contribute to the FAD site. 273-287 (GPRYCPSIEDKVMRF) provides a ligand contact to NAD(+). Residue Q370 coordinates FAD.

This sequence belongs to the MnmG family. In terms of assembly, homodimer. Heterotetramer of two MnmE and two MnmG subunits. FAD serves as cofactor.

It localises to the cytoplasm. NAD-binding protein involved in the addition of a carboxymethylaminomethyl (cmnm) group at the wobble position (U34) of certain tRNAs, forming tRNA-cmnm(5)s(2)U34. This Escherichia coli O157:H7 protein is tRNA uridine 5-carboxymethylaminomethyl modification enzyme MnmG.